Here is a 136-residue protein sequence, read N- to C-terminus: Large ribosomal subunit protein bL17 (136 aa).

This sequence belongs to the bacterial ribosomal protein bL17 family. As to quaternary structure, part of the 50S ribosomal subunit. Contacts protein L32.

The sequence is that of Large ribosomal subunit protein bL17 from Rhodopseudomonas palustris (strain BisB5).